A 471-amino-acid polypeptide reads, in one-letter code: UDP-N-acetylmuramate--L-alanine ligase (471 aa).

114 to 120 lines the ATP pocket; it reads GTHGKTT.

The protein belongs to the MurCDEF family.

The protein localises to the cytoplasm. It carries out the reaction UDP-N-acetyl-alpha-D-muramate + L-alanine + ATP = UDP-N-acetyl-alpha-D-muramoyl-L-alanine + ADP + phosphate + H(+). It functions in the pathway cell wall biogenesis; peptidoglycan biosynthesis. In terms of biological role, cell wall formation. The polypeptide is UDP-N-acetylmuramate--L-alanine ligase (Sinorhizobium medicae (strain WSM419) (Ensifer medicae)).